The sequence spans 225 residues: Imidazole glycerol phosphate synthase subunit HisH (225 aa).

The region spanning 3–225 (TIAIVDYGMG…LYRNFVDWQP (223 aa)) is the Glutamine amidotransferase type-1 domain. The Nucleophile role is filled by cysteine 82. Active-site residues include histidine 205 and glutamate 207.

As to quaternary structure, heterodimer of HisH and HisF.

It is found in the cytoplasm. It carries out the reaction 5-[(5-phospho-1-deoxy-D-ribulos-1-ylimino)methylamino]-1-(5-phospho-beta-D-ribosyl)imidazole-4-carboxamide + L-glutamine = D-erythro-1-(imidazol-4-yl)glycerol 3-phosphate + 5-amino-1-(5-phospho-beta-D-ribosyl)imidazole-4-carboxamide + L-glutamate + H(+). The catalysed reaction is L-glutamine + H2O = L-glutamate + NH4(+). Its pathway is amino-acid biosynthesis; L-histidine biosynthesis; L-histidine from 5-phospho-alpha-D-ribose 1-diphosphate: step 5/9. Functionally, IGPS catalyzes the conversion of PRFAR and glutamine to IGP, AICAR and glutamate. The HisH subunit catalyzes the hydrolysis of glutamine to glutamate and ammonia as part of the synthesis of IGP and AICAR. The resulting ammonia molecule is channeled to the active site of HisF. This chain is Imidazole glycerol phosphate synthase subunit HisH, found in Bordetella pertussis (strain Tohama I / ATCC BAA-589 / NCTC 13251).